The chain runs to 542 residues: Chaperonin GroEL 2 (542 aa).

Residues T30 to P33, K51, D87 to T91, G415, and D496 contribute to the ATP site.

This sequence belongs to the chaperonin (HSP60) family. As to quaternary structure, forms a cylinder of 14 subunits composed of two heptameric rings stacked back-to-back. Interacts with the co-chaperonin GroES.

Its subcellular location is the cytoplasm. It carries out the reaction ATP + H2O + a folded polypeptide = ADP + phosphate + an unfolded polypeptide.. In terms of biological role, together with its co-chaperonin GroES, plays an essential role in assisting protein folding. The GroEL-GroES system forms a nano-cage that allows encapsulation of the non-native substrate proteins and provides a physical environment optimized to promote and accelerate protein folding. This is Chaperonin GroEL 2 from Rhizobium meliloti (strain 1021) (Ensifer meliloti).